Here is a 280-residue protein sequence, read N- to C-terminus: Shikimate dehydrogenase (NADP(+)) (280 aa).

Shikimate contacts are provided by residues 20 to 22 and threonine 67; that span reads SRS. Lysine 71 functions as the Proton acceptor in the catalytic mechanism. Aspartate 82 provides a ligand contact to NADP(+). 2 residues coordinate shikimate: asparagine 91 and aspartate 106. NADP(+)-binding positions include 131 to 135 and leucine 220; that span reads GAGGS. Tyrosine 222 is a binding site for shikimate. Glycine 243 is a binding site for NADP(+).

It belongs to the shikimate dehydrogenase family. In terms of assembly, homodimer.

It catalyses the reaction shikimate + NADP(+) = 3-dehydroshikimate + NADPH + H(+). It functions in the pathway metabolic intermediate biosynthesis; chorismate biosynthesis; chorismate from D-erythrose 4-phosphate and phosphoenolpyruvate: step 4/7. Functionally, involved in the biosynthesis of the chorismate, which leads to the biosynthesis of aromatic amino acids. Catalyzes the reversible NADPH linked reduction of 3-dehydroshikimate (DHSA) to yield shikimate (SA). This Rhodopseudomonas palustris (strain HaA2) protein is Shikimate dehydrogenase (NADP(+)).